Consider the following 243-residue polypeptide: Peptidyl-tRNA hydrolase (243 aa).

Tyr14 provides a ligand contact to tRNA. The Proton acceptor role is filled by His19. Residues Tyr64, Asn66, and Asn112 each contribute to the tRNA site. A compositionally biased stretch (basic and acidic residues) spans 190 to 207 (KAEEEKPRKEGKDGEKKP). The segment at 190–243 (KAEEEKPRKEGKDGEKKPAGQSHIRQARSSNQPKLPATGPMAEMLKKMFGNKGE) is disordered. Over residues 212-222 (HIRQARSSNQP) the composition is skewed to polar residues.

The protein belongs to the PTH family. As to quaternary structure, monomer.

It is found in the cytoplasm. It catalyses the reaction an N-acyl-L-alpha-aminoacyl-tRNA + H2O = an N-acyl-L-amino acid + a tRNA + H(+). Its function is as follows. Hydrolyzes ribosome-free peptidyl-tRNAs (with 1 or more amino acids incorporated), which drop off the ribosome during protein synthesis, or as a result of ribosome stalling. Catalyzes the release of premature peptidyl moieties from peptidyl-tRNA molecules trapped in stalled 50S ribosomal subunits, and thus maintains levels of free tRNAs and 50S ribosomes. The polypeptide is Peptidyl-tRNA hydrolase (Rhizobium etli (strain CIAT 652)).